The chain runs to 254 residues: Alcohol dehydrogenase (254 aa).

10-33 lines the NAD(+) pocket; that stretch reads FVAGLGGIGLDTNREIVKSGPKNL. Substrate is bound at residue serine 138. Tyrosine 151 (proton acceptor) is an active-site residue.

Belongs to the short-chain dehydrogenases/reductases (SDR) family. Homodimer.

The enzyme catalyses a primary alcohol + NAD(+) = an aldehyde + NADH + H(+). It carries out the reaction a secondary alcohol + NAD(+) = a ketone + NADH + H(+). The polypeptide is Alcohol dehydrogenase (Adh) (Scaptomyza albovittata (Fruit fly)).